We begin with the raw amino-acid sequence, 260 residues long: BTB/POZ domain-containing protein KCTD21 (260 aa).

A BTB domain is found at 3-72 (DPITLNVGGK…LRTSHLDLPE (70 aa)). Residues 88-112 (QVQPLIEALQEKEVELSKAEKNAML) are a coiled coil.

Homopentamer. Interacts with KCTD11; KCTD21 and KCTD11 may associate in pentameric assemblies. Interacts (via BTB domain) with CUL3; indicative for a participation in a BCR (BTB-CUL3-RBX1) E3 ubiquitin-protein ligase complex. In terms of tissue distribution, highly expressed in cerebellum and brain. Expression is down-regulated in medulloblastoma.

It functions in the pathway protein modification; protein ubiquitination. Functionally, probable substrate-specific adapter of a BCR (BTB-CUL3-RBX1) E3 ubiquitin-protein ligase complex mediating the ubiquitination and subsequent proteasomal degradation of target proteins. Promotes the ubiquitination of HDAC1. Can function as antagonist of the Hedgehog pathway by affecting the nuclear transfer of transcription factor GLI1; the function probably occurs via HDAC1 down-regulation, keeping GLI1 acetylated and inactive. Inhibits cell growth and tumorigenicity of medulloblastoma (MDB). The protein is BTB/POZ domain-containing protein KCTD21 (KCTD21) of Homo sapiens (Human).